We begin with the raw amino-acid sequence, 141 residues long: MERYQELTVLLLLLLLEGGSWGAGHLRPLCRPTNATLAAESDACPVCVTFTTTICAGYCPSMVRVLPAALPPGPQLVCTYRELSFSSIRLPGCPPGVDPIFSFPVALSCSCGSCRLSHSDCGGPRARPHLCTRPHLSLHLL.

An N-terminal signal peptide occupies residues 1–22 (MERYQELTVLLLLLLLEGGSWG). 6 cysteine pairs are disulfide-bonded: Cys30-Cys78, Cys44-Cys93, Cys47-Cys131, Cys55-Cys109, Cys59-Cys111, and Cys114-Cys121. A glycan (N-linked (GlcNAc...) asparagine) is linked at Asn34.

Belongs to the glycoprotein hormones subunit beta family. As to quaternary structure, heterodimer of a common alpha chain and a unique beta chain which confers biological specificity to thyrotropin, lutropin, follitropin and gonadotropin.

It localises to the secreted. Functionally, promotes spermatogenesis and ovulation by stimulating the testes and ovaries to synthesize steroids. The sequence is that of Lutropin subunit beta (LHB) from Trichosurus vulpecula (Brush-tailed possum).